The primary structure comprises 97 residues: Ataxin-7-like protein 3B (97 aa).

The tract at residues Ser76–Gln97 is disordered. Ser92 bears the Phosphoserine mark.

This sequence belongs to the SGF11 family. As to quaternary structure, interacts strongly with ENY2. Interacts weakly with USP22.

Its subcellular location is the cytoplasm. By binding to ENY2, interferes with the nuclear functions of the deubiquitinase (DUB) module of the SAGA complex which consists of ENY2, ATXN7, ATXN7L3 and the histone deubiquitinating component USP22. Affects USP22 DUB activity toward histones indirectly by changing the subcellular distribution of ENY2 and altering ENY2 availability for ATXN7L3 interaction. Regulates H2B monoubiquitination (H2Bub1) levels through cytoplasmic sequestration of ENY2 resulting in loss of nuclear ENY2-ATXN7L3 association which destabilizes ATXN7L3. Affects protein expression levels of ENY2 and ATXN7L3. The protein is Ataxin-7-like protein 3B (Atxn7l3b) of Mus musculus (Mouse).